A 244-amino-acid polypeptide reads, in one-letter code: Probable Ni/Fe-hydrogenase B-type cytochrome subunit (244 aa).

4 consecutive transmembrane segments (helical) span residues 39 to 59 (LWHWVNALAIVVLAVTGFFIG), 73 to 93 (FLMGYIRFAHFVAAYIFAIGM), 150 to 171 (FAMFFIFFLSSVFMILTGFAMY), and 204 to 221 (LGMWFIVVFVIVHVYAAI).

This sequence belongs to the HupC/HyaC/HydC family.

Its subcellular location is the cell membrane. Functionally, probable b-type cytochrome. The sequence is that of Probable Ni/Fe-hydrogenase B-type cytochrome subunit (hoxZ) from Cupriavidus necator (strain ATCC 17699 / DSM 428 / KCTC 22496 / NCIMB 10442 / H16 / Stanier 337) (Ralstonia eutropha).